A 298-amino-acid polypeptide reads, in one-letter code: ADP/ATP translocase 1 (298 aa).

The Mitochondrial intermembrane portion of the chain corresponds to 1 to 7 (MGDQALS). Gly2 bears the N-acetylglycine mark. A Solcar 1 repeat occupies 6–98 (LSFLKDFLAG…FAFKDKYKQI (93 aa)). Ser7 carries the post-translational modification Phosphoserine. The chain crosses the membrane as a helical span at residues 8–37 (FLKDFLAGGIAAAVSKTAVAPIERVKLLLQ). Residues 38–74 (VQHASKQISAEKQYKGIIDCVVRIPKEQGFLSFWRGN) are Mitochondrial matrix-facing. Position 52 is an N6,N6,N6-trimethyllysine (Lys52). A helical transmembrane segment spans residues 75 to 99 (LANVIRYFPTQALNFAFKDKYKQIF). 2 residues coordinate ADP: Arg80 and Lys92. The Mitochondrial intermembrane segment spans residues 100–109 (LGGVDRHKQF). The chain crosses the membrane as a helical span at residues 110–130 (WRYFAGNLASGGAAGATSLCF). Solcar repeat units follow at residues 111–201 (RYFA…AKGM) and 212–297 (VSWM…IKKY). The Mitochondrial matrix segment spans residues 131 to 178 (VYPLDFARTRLAADVGKGSSQREFNGLGDCLTKIFKSDGLKGLYQGFS). The residue at position 147 (Lys147) is an N6-succinyllysine. Residues Ser149 and Ser150 each carry the phosphoserine modification. Residue Cys160 is modified to S-nitrosocysteine. Residues 179 to 199 (VSVQGIIIYRAAYFGVYDTAK) traverse the membrane as a helical segment. At 200–210 (GMLPDPKNVHI) the chain is on the mitochondrial intermembrane side. A helical transmembrane segment spans residues 211 to 231 (IVSWMIAQSVTAVAGLVSYPF). At 232–273 (DTVRRRMMMQSGRKGADIMYTGTVDCWRKIAKDEGRKAFFKG) the chain is on the mitochondrial matrix side. Residue Arg235 coordinates ADP. The segment at 235 to 240 (RRRMMM) is important for transport activity. The short motif at 235 to 240 (RRRMMM) is the Nucleotide carrier signature motif element. Residues Lys245 and Lys272 each carry the N6-succinyllysine modification. Residues 274–291 (AWSNVLRGMGGAFVLVLY) traverse the membrane as a helical segment. Residues 292–298 (DEIKKYV) are Mitochondrial intermembrane-facing.

It belongs to the mitochondrial carrier (TC 2.A.29) family. As to quaternary structure, monomer. Found in a complex with ARL2, ARL2BP and SLC25A4/ANT1. Interacts with ARL2BP. Interacts with TIMM44; leading to inhibit the presequence translocase TIMM23, thereby promoting stabilization of PINK1. Post-translationally, under cell death induction, transglutaminated by TGM2. Transglutamination leads to formation of covalent cross-links between a glutamine and the epsilon-amino group of a lysine residue, forming polymers.

It localises to the mitochondrion inner membrane. Its subcellular location is the membrane. The catalysed reaction is ADP(in) + ATP(out) = ADP(out) + ATP(in). It catalyses the reaction H(+)(in) = H(+)(out). Its activity is regulated as follows. The matrix-open state (m-state) is inhibited by the membrane-permeable bongkrekic acid (BKA). The cytoplasmic-open state (c-state) is inhibited by the membrane-impermeable toxic inhibitor carboxyatractyloside (CATR). Proton transporter activity is inhibited by ADP:ATP antiporter activity. In terms of biological role, ADP:ATP antiporter that mediates import of ADP into the mitochondrial matrix for ATP synthesis, and export of ATP out to fuel the cell. Cycles between the cytoplasmic-open state (c-state) and the matrix-open state (m-state): operates by the alternating access mechanism with a single substrate-binding site intermittently exposed to either the cytosolic (c-state) or matrix (m-state) side of the inner mitochondrial membrane. In addition to its ADP:ATP antiporter activity, also involved in mitochondrial uncoupling and mitochondrial permeability transition pore (mPTP) activity. Plays a role in mitochondrial uncoupling by acting as a proton transporter: proton transport uncouples the proton flows via the electron transport chain and ATP synthase to reduce the efficiency of ATP production and cause mitochondrial thermogenesis. Proton transporter activity is inhibited by ADP:ATP antiporter activity, suggesting that SLC25A4/ANT1 acts as a master regulator of mitochondrial energy output by maintaining a delicate balance between ATP production (ADP:ATP antiporter activity) and thermogenesis (proton transporter activity). Proton transporter activity requires free fatty acids as cofactor, but does not transport it. Also plays a key role in mPTP opening, a non-specific pore that enables free passage of the mitochondrial membranes to solutes of up to 1.5 kDa, and which contributes to cell death. It is however unclear if SLC25A4/ANT1 constitutes a pore-forming component of mPTP or regulates it. Acts as a regulator of mitophagy independently of ADP:ATP antiporter activity: promotes mitophagy via interaction with TIMM44, leading to inhibit the presequence translocase TIMM23, thereby promoting stabilization of PINK1. In Rattus norvegicus (Rat), this protein is ADP/ATP translocase 1.